We begin with the raw amino-acid sequence, 103 residues long: UPF0145 protein BLi01945/BL05168 (103 aa).

Belongs to the UPF0145 family.

This is UPF0145 protein BLi01945/BL05168 from Bacillus licheniformis (strain ATCC 14580 / DSM 13 / JCM 2505 / CCUG 7422 / NBRC 12200 / NCIMB 9375 / NCTC 10341 / NRRL NRS-1264 / Gibson 46).